Reading from the N-terminus, the 428-residue chain is Enolase (428 aa).

Glutamine 162 contacts (2R)-2-phosphoglycerate. The active-site Proton donor is the glutamate 204. Residues aspartate 241, glutamate 286, and aspartate 313 each contribute to the Mg(2+) site. The (2R)-2-phosphoglycerate site is built by lysine 338, arginine 367, serine 368, and lysine 389. The active-site Proton acceptor is the lysine 338.

The protein belongs to the enolase family. As to quaternary structure, component of the RNA degradosome, a multiprotein complex involved in RNA processing and mRNA degradation. Mg(2+) serves as cofactor.

Its subcellular location is the cytoplasm. The protein localises to the secreted. The protein resides in the cell surface. It catalyses the reaction (2R)-2-phosphoglycerate = phosphoenolpyruvate + H2O. The protein operates within carbohydrate degradation; glycolysis; pyruvate from D-glyceraldehyde 3-phosphate: step 4/5. Catalyzes the reversible conversion of 2-phosphoglycerate (2-PG) into phosphoenolpyruvate (PEP). It is essential for the degradation of carbohydrates via glycolysis. The chain is Enolase from Vesicomyosocius okutanii subsp. Calyptogena okutanii (strain HA).